Reading from the N-terminus, the 111-residue chain is Large ribosomal subunit protein uL22 (111 aa).

Belongs to the universal ribosomal protein uL22 family. Part of the 50S ribosomal subunit.

In terms of biological role, this protein binds specifically to 23S rRNA; its binding is stimulated by other ribosomal proteins, e.g. L4, L17, and L20. It is important during the early stages of 50S assembly. It makes multiple contacts with different domains of the 23S rRNA in the assembled 50S subunit and ribosome. The globular domain of the protein is located near the polypeptide exit tunnel on the outside of the subunit, while an extended beta-hairpin is found that lines the wall of the exit tunnel in the center of the 70S ribosome. This chain is Large ribosomal subunit protein uL22, found in Clostridioides difficile (strain 630) (Peptoclostridium difficile).